The sequence spans 387 residues: Probable inactive shikimate kinase like 2, chloroplastic (387 aa).

The transit peptide at 1–71 directs the protein to the chloroplast; the sequence is MAAFASGLAI…FNSFSCNCLS (71 aa). A disordered region spans residues 368–387; sequence NIKPPGWDPSSDTGPHPQFT.

The protein belongs to the shikimate kinase family.

The protein localises to the plastid. It localises to the chloroplast. The polypeptide is Probable inactive shikimate kinase like 2, chloroplastic (SKL2) (Arabidopsis thaliana (Mouse-ear cress)).